Reading from the N-terminus, the 392-residue chain is 8-amino-7-oxononanoate synthase (392 aa).

A substrate-binding site is contributed by Arg18. 105-106 (GY) lines the pyridoxal 5'-phosphate pocket. A substrate-binding site is contributed by His130. Residues Ser177, His205, and Thr234 each coordinate pyridoxal 5'-phosphate. Residue Lys237 is modified to N6-(pyridoxal phosphate)lysine. Thr351 provides a ligand contact to substrate.

The protein belongs to the class-II pyridoxal-phosphate-dependent aminotransferase family. BioF subfamily. Homodimer. Pyridoxal 5'-phosphate is required as a cofactor.

The enzyme catalyses 6-carboxyhexanoyl-[ACP] + L-alanine + H(+) = (8S)-8-amino-7-oxononanoate + holo-[ACP] + CO2. The protein operates within cofactor biosynthesis; biotin biosynthesis. Functionally, catalyzes the decarboxylative condensation of pimeloyl-[acyl-carrier protein] and L-alanine to produce 8-amino-7-oxononanoate (AON), [acyl-carrier protein], and carbon dioxide. This Thioalkalivibrio sulfidiphilus (strain HL-EbGR7) protein is 8-amino-7-oxononanoate synthase.